The primary structure comprises 487 residues: N-succinylglutamate 5-semialdehyde dehydrogenase (487 aa).

221 to 226 contributes to the NAD(+) binding site; sequence GSSDTG. Active-site residues include Glu244 and Cys278.

The protein belongs to the aldehyde dehydrogenase family. AstD subfamily.

The enzyme catalyses N-succinyl-L-glutamate 5-semialdehyde + NAD(+) + H2O = N-succinyl-L-glutamate + NADH + 2 H(+). Its pathway is amino-acid degradation; L-arginine degradation via AST pathway; L-glutamate and succinate from L-arginine: step 4/5. Functionally, catalyzes the NAD-dependent reduction of succinylglutamate semialdehyde into succinylglutamate. This is N-succinylglutamate 5-semialdehyde dehydrogenase from Burkholderia cenocepacia (strain ATCC BAA-245 / DSM 16553 / LMG 16656 / NCTC 13227 / J2315 / CF5610) (Burkholderia cepacia (strain J2315)).